The primary structure comprises 170 residues: Large ribosomal subunit protein bL17 (170 aa).

The segment covering 124 to 134 (AAEAPKAAKAA) has biased composition (low complexity). Residues 124–170 (AAEAPKAAKAAPVKEAKPAAEEAPAKPKRTRKPKADEADAEAAKEEN) are disordered. Basic and acidic residues-rich tracts occupy residues 135–148 (PVKE…EAPA) and 156–170 (PKAD…KEEN).

The protein belongs to the bacterial ribosomal protein bL17 family. In terms of assembly, part of the 50S ribosomal subunit. Contacts protein L32.

In Desulfovibrio desulfuricans (strain ATCC 27774 / DSM 6949 / MB), this protein is Large ribosomal subunit protein bL17.